The following is a 220-amino-acid chain: UPF0441 protein Spro_4274 (220 aa).

The tract at residues M181–G220 is disordered. A compositionally biased stretch (low complexity) spans Q203–G220.

It belongs to the UPF0441 family.

The chain is UPF0441 protein Spro_4274 from Serratia proteamaculans (strain 568).